A 157-amino-acid polypeptide reads, in one-letter code: Snaclec EMS16 subunit alpha (157 aa).

The N-terminal stretch at 1-23 is a signal peptide; sequence MGRFISVSFGLLVVFLSLSGTGA. 3 disulfide bridges follow: cysteine 27–cysteine 38, cysteine 55–cysteine 152, and cysteine 127–cysteine 144. The C-type lectin domain occupies 34 to 153; that stretch reads YDQHCYLAIG…CEDLYPFVCK (120 aa).

It belongs to the snaclec family. In terms of assembly, heterodimer of subunits A and B; disulfide-linked. As to expression, expressed by the venom gland.

It localises to the secreted. Functionally, EMS16 is a potent and selective inhibitor of alpha-2/beta-1 (ITGA2/ITGB1) integrin and acts as a potent antagonist of platelet aggregation and cell migration. Binds specifically to the I domain of the alpha-2 subunit, in a metal ion-independent fashion. The sequence is that of Snaclec EMS16 subunit alpha from Echis multisquamatus (Central Asian sand viper).